The sequence spans 295 residues: 4-diphosphocytidyl-2-C-methyl-D-erythritol kinase (295 aa).

K25 is an active-site residue. An ATP-binding site is contributed by 108–118 (PMGSGLGGGSS). D150 is a catalytic residue.

Belongs to the GHMP kinase family. IspE subfamily.

The enzyme catalyses 4-CDP-2-C-methyl-D-erythritol + ATP = 4-CDP-2-C-methyl-D-erythritol 2-phosphate + ADP + H(+). Its pathway is isoprenoid biosynthesis; isopentenyl diphosphate biosynthesis via DXP pathway; isopentenyl diphosphate from 1-deoxy-D-xylulose 5-phosphate: step 3/6. Catalyzes the phosphorylation of the position 2 hydroxy group of 4-diphosphocytidyl-2C-methyl-D-erythritol. The sequence is that of 4-diphosphocytidyl-2-C-methyl-D-erythritol kinase from Pasteurella multocida (strain Pm70).